A 168-amino-acid chain; its full sequence is Group IIF secretory phospholipase A2 (168 aa).

Residues M1–G20 form the signal peptide. 7 disulfides stabilise this stretch: C46/C138, C48/C64, C63/C120, C69/C145, C70/C113, C79/C106, and C98/C111. Ca(2+) is bound by residues Y47, G49, and G51. The active site involves H67. A Ca(2+)-binding site is contributed by D68. N-linked (GlcNAc...) asparagine glycosylation is found at N92 and N102. Residue D114 is part of the active site. 2 N-linked (GlcNAc...) asparagine glycosylation sites follow: N123 and N144. The required for localization on the plasma membrane stretch occupies residues Q139–P168.

The protein belongs to the phospholipase A2 family. Ca(2+) is required as a cofactor. Expressed at high levels in placenta, testis, thymus and at lower levels in heart, kidney, liver and prostate. Highly expressed in rheumatoid arthritic tissues, including synovial lining cells in the intima, capillary endothelial cells and plasma cells.

The protein resides in the secreted. It localises to the cell membrane. The enzyme catalyses a 1,2-diacyl-sn-glycero-3-phosphocholine + H2O = a 1-acyl-sn-glycero-3-phosphocholine + a fatty acid + H(+). It catalyses the reaction 1-hexadecanoyl-2-(9Z-octadecenoyl)-sn-glycero-3-phospho-(1'-sn-glycerol) + H2O = 1-hexadecanoyl-sn-glycero-3-phospho-(1'-sn-glycerol) + (9Z)-octadecenoate + H(+). It carries out the reaction 1-hexadecanoyl-2-(9Z,12Z-octadecadienoyl)-sn-glycero-3-phosphoethanolamine + H2O = 1-hexadecanoyl-sn-glycero-3-phosphoethanolamine + (9Z,12Z)-octadecadienoate + H(+). The catalysed reaction is 1-hexadecanoyl-2-(5Z,8Z,11Z,14Z-eicosatetraenoyl)-sn-glycero-3-phosphoethanolamine + H2O = 1-hexadecanoyl-sn-glycero-3-phosphoethanolamine + (5Z,8Z,11Z,14Z)-eicosatetraenoate + H(+). The enzyme catalyses 1-hexadecanoyl-2-(9Z-octadecenoyl)-sn-glycero-3-phosphocholine + H2O = 1-hexadecanoyl-sn-glycero-3-phosphocholine + (9Z)-octadecenoate + H(+). It catalyses the reaction 1-hexadecanoyl-2-(9Z-octadecenoyl)-sn-glycero-3-phospho-L-serine + H2O = 1-hexadecanoyl-sn-glycero-3-phospho-L-serine + (9Z)-octadecenoate + H(+). In terms of biological role, secretory calcium-dependent phospholipase A2 that primarily targets extracellular phospholipids. Hydrolyzes the ester bond of the fatty acyl group attached at the sn-2 position of phospholipids (phospholipase A2 activity), the catalytic efficiency decreasing in the following order: phosphatidylglycerols &gt; phosphatidylethanolamines &gt; phosphatidylcholines &gt; phosphatidylserines. May play a role in lipid mediator production in inflammatory conditions, by providing arachidonic acid to downstream cyclooxygenases and lipoxygenases. This Homo sapiens (Human) protein is Group IIF secretory phospholipase A2 (PLA2G2F).